Here is a 318-residue protein sequence, read N- to C-terminus: Ribose-phosphate pyrophosphokinase 2 (318 aa).

Arg96–Asp101 lines the ATP pocket. 4 residues coordinate Mg(2+): Asp128, His130, Asp139, and Asp143. His130 contributes to the ATP binding site. Residues Lys212–Gly227 form a binding of phosphoribosylpyrophosphate region.

Belongs to the ribose-phosphate pyrophosphokinase family. As to quaternary structure, homodimer. The active form is probably a hexamer composed of 3 homodimers. Requires Mg(2+) as cofactor.

It catalyses the reaction D-ribose 5-phosphate + ATP = 5-phospho-alpha-D-ribose 1-diphosphate + AMP + H(+). Its pathway is metabolic intermediate biosynthesis; 5-phospho-alpha-D-ribose 1-diphosphate biosynthesis; 5-phospho-alpha-D-ribose 1-diphosphate from D-ribose 5-phosphate (route I): step 1/1. Activated by magnesium and inorganic phosphate. Competitively or non-competitively inhibited by ADP, 2,3-bisphosphoglyceride or GDP. In terms of biological role, catalyzes the synthesis of phosphoribosylpyrophosphate (PRPP) that is essential for nucleotide synthesis. The polypeptide is Ribose-phosphate pyrophosphokinase 2 (prps2) (Xenopus laevis (African clawed frog)).